Consider the following 299-residue polypeptide: Putative peptidyl-prolyl cis-trans isomerase HP_0175 (299 aa).

A signal peptide spans 1–21; the sequence is MKKNILNLALVGALSTSFLMA. The PpiC domain occupies 154–253; the sequence is KQEAHARHIL…FGYHIIYLIS (100 aa).

It carries out the reaction [protein]-peptidylproline (omega=180) = [protein]-peptidylproline (omega=0). The polypeptide is Putative peptidyl-prolyl cis-trans isomerase HP_0175 (Helicobacter pylori (strain ATCC 700392 / 26695) (Campylobacter pylori)).